Consider the following 422-residue polypeptide: Glutamate-1-semialdehyde 2,1-aminomutase (422 aa).

Lysine 264 carries the N6-(pyridoxal phosphate)lysine modification.

The protein belongs to the class-III pyridoxal-phosphate-dependent aminotransferase family. HemL subfamily. Homodimer. The cofactor is pyridoxal 5'-phosphate.

The protein resides in the cytoplasm. It catalyses the reaction (S)-4-amino-5-oxopentanoate = 5-aminolevulinate. It participates in porphyrin-containing compound metabolism; protoporphyrin-IX biosynthesis; 5-aminolevulinate from L-glutamyl-tRNA(Glu): step 2/2. The protein is Glutamate-1-semialdehyde 2,1-aminomutase of Clostridium kluyveri (strain ATCC 8527 / DSM 555 / NBRC 12016 / NCIMB 10680 / K1).